The following is a 403-amino-acid chain: Acetylornithine aminotransferase (403 aa).

Residues 107-108 (GA) and F140 contribute to the pyridoxal 5'-phosphate site. R143 serves as a coordination point for N(2)-acetyl-L-ornithine. 225 to 228 (DEVQ) contacts pyridoxal 5'-phosphate. K254 carries the post-translational modification N6-(pyridoxal phosphate)lysine. S282 lines the N(2)-acetyl-L-ornithine pocket. T283 provides a ligand contact to pyridoxal 5'-phosphate.

It belongs to the class-III pyridoxal-phosphate-dependent aminotransferase family. ArgD subfamily. As to quaternary structure, homodimer. It depends on pyridoxal 5'-phosphate as a cofactor.

The protein resides in the cytoplasm. The catalysed reaction is N(2)-acetyl-L-ornithine + 2-oxoglutarate = N-acetyl-L-glutamate 5-semialdehyde + L-glutamate. The protein operates within amino-acid biosynthesis; L-arginine biosynthesis; N(2)-acetyl-L-ornithine from L-glutamate: step 4/4. This is Acetylornithine aminotransferase from Vibrio vulnificus (strain YJ016).